We begin with the raw amino-acid sequence, 171 residues long: MTSHFALFDLEPDFRLDQDRLAVRYRELVRRVHPDRFAGAPEREQRLALEEAARLNEAYQTLKSPSQRARYLLSLQGEELSQETTVQDPAFLMQQMELREELQELQDSADLAGVARFKRRLVQDQEQLNEGFAACWADPRRRDEAERLARRMQFLDKLFAEVRQLEERLDD.

A J domain is found at 3–75; that stretch reads SHFALFDLEP…SQRARYLLSL (73 aa).

It belongs to the HscB family. Interacts with HscA and stimulates its ATPase activity.

Co-chaperone involved in the maturation of iron-sulfur cluster-containing proteins. Seems to help targeting proteins to be folded toward HscA. The protein is Co-chaperone protein HscB homolog of Azotobacter vinelandii.